A 148-amino-acid polypeptide reads, in one-letter code: FAD synthase (148 aa).

Residues 14-15, 19-22, and aspartate 100 each bind ATP; these read VF and HAGH.

It belongs to the archaeal FAD synthase family. Homodimer. It depends on a divalent metal cation as a cofactor.

The catalysed reaction is FMN + ATP + H(+) = FAD + diphosphate. It participates in cofactor biosynthesis; FAD biosynthesis; FAD from FMN: step 1/1. Functionally, catalyzes the transfer of the AMP portion of ATP to flavin mononucleotide (FMN) to produce flavin adenine dinucleotide (FAD) coenzyme. This is FAD synthase from Pyrococcus horikoshii (strain ATCC 700860 / DSM 12428 / JCM 9974 / NBRC 100139 / OT-3).